Consider the following 506-residue polypeptide: Trans-cinnamate 4-monooxygenase C4H1 (506 aa).

2 consecutive short sequence motifs (nuclear localization signal) follow at residues 161–168 (VKKMPESA) and 247–254 (QRRLQLFK). Residue Cys448 participates in heme binding.

This sequence belongs to the cytochrome P450 family. Heme is required as a cofactor.

Its subcellular location is the nucleus. The catalysed reaction is (E)-cinnamate + reduced [NADPH--hemoprotein reductase] + O2 = (E)-4-coumarate + oxidized [NADPH--hemoprotein reductase] + H2O + H(+). It participates in phenylpropanoid metabolism; trans-4-coumarate biosynthesis; trans-4-coumarate from trans-cinnamate: step 1/1. Its function is as follows. Component of the floral volatile benzenoid/phenylpropanoid (FVBP) biosynthetic pathway that controls carbon flux to pigments essential for pollination or UV protection, to numerous pytoalexins synthesized by plants when challenged by pathogens, and to lignins. The polypeptide is Trans-cinnamate 4-monooxygenase C4H1 (Petunia hybrida (Petunia)).